Reading from the N-terminus, the 510-residue chain is Cytochrome c-552 (510 aa).

An N-terminal signal peptide occupies residues 1 to 50; that stretch reads MVVFLFILYRQSDLKFKSMNGVIIVNTLKKRLFVATTMIWGLSVTLPVLA. His-124 provides a ligand contact to heme c. Residues Cys-152, Cys-155, and Lys-156 each contribute to the heme site. Heme c is bound by residues Cys-190, Cys-193, His-194, Cys-239, Cys-242, and His-243. Residues Glu-245, Tyr-246, Lys-291, and Gln-293 each contribute to the Ca(2+) site. Tyr-246 is a substrate binding site. His-294 lines the substrate pocket. Heme c contacts are provided by His-305, Cys-312, Cys-315, His-316, His-331, Cys-344, Cys-347, His-348, and His-423.

The protein belongs to the cytochrome c-552 family. Ca(2+) serves as cofactor. It depends on heme c as a cofactor.

The protein localises to the periplasm. The catalysed reaction is 6 Fe(III)-[cytochrome c] + NH4(+) + 2 H2O = 6 Fe(II)-[cytochrome c] + nitrite + 8 H(+). It participates in nitrogen metabolism; nitrate reduction (assimilation). Catalyzes the reduction of nitrite to ammonia, consuming six electrons in the process. The protein is Cytochrome c-552 of Pasteurella multocida (strain Pm70).